Here is a 585-residue protein sequence, read N- to C-terminus: Arginine--tRNA ligase (585 aa).

The 'HIGH' region signature appears at proline 127–histidine 137.

Belongs to the class-I aminoacyl-tRNA synthetase family. Monomer.

The protein resides in the cytoplasm. The catalysed reaction is tRNA(Arg) + L-arginine + ATP = L-arginyl-tRNA(Arg) + AMP + diphosphate. The sequence is that of Arginine--tRNA ligase from Borreliella afzelii (strain PKo) (Borrelia afzelii).